The sequence spans 183 residues: Segregation and condensation protein B (183 aa).

The protein belongs to the ScpB family. As to quaternary structure, homodimer. Homodimerization may be required to stabilize the binding of ScpA to the Smc head domains. Component of a cohesin-like complex composed of ScpA, ScpB and the Smc homodimer, in which ScpA and ScpB bind to the head domain of Smc. The presence of the three proteins is required for the association of the complex with DNA.

It localises to the cytoplasm. In terms of biological role, participates in chromosomal partition during cell division. May act via the formation of a condensin-like complex containing Smc and ScpA that pull DNA away from mid-cell into both cell halves. The chain is Segregation and condensation protein B from Streptococcus pyogenes serotype M12 (strain MGAS2096).